Here is an 801-residue protein sequence, read N- to C-terminus: Elongation factor G, mitochondrial (801 aa).

The N-terminal 65 residues, 1-65, are a transit peptide targeting the mitochondrion; it reads MRVQSLLRAQ…QKIQNQRRWQ (65 aa). The tr-type G domain occupies 100–387; it reads SRVRNIGIAA…AVCDYLPNPS (288 aa). GTP contacts are provided by residues 109–116, 185–189, and 239–242; these read AHIDSGKT, DTPGH, and NKMD.

It belongs to the TRAFAC class translation factor GTPase superfamily. Classic translation factor GTPase family. EF-G/EF-2 subfamily.

It localises to the mitochondrion. It functions in the pathway protein biosynthesis; polypeptide chain elongation. In terms of biological role, mitochondrial GTPase that catalyzes the GTP-dependent ribosomal translocation step during translation elongation. During this step, the ribosome changes from the pre-translocational (PRE) to the post-translocational (POST) state as the newly formed A-site-bound peptidyl-tRNA and P-site-bound deacylated tRNA move to the P and E sites, respectively. Catalyzes the coordinated movement of the two tRNA molecules, the mRNA and conformational changes in the ribosome. In Pyrenophora tritici-repentis (strain Pt-1C-BFP) (Wheat tan spot fungus), this protein is Elongation factor G, mitochondrial (mef1).